Consider the following 294-residue polypeptide: HTH-type transcriptional regulator XapR (294 aa).

Residues 7–64 (TDLKLLRYFLAVAEELHFGRAAARLNMSQPPLSIHIKELENQLGTQLFIRHSRSVVLT) enclose the HTH lysR-type domain. The segment at residues 24–43 (FGRAAARLNMSQPPLSIHIK) is a DNA-binding region (H-T-H motif).

Belongs to the LysR transcriptional regulatory family.

In terms of biological role, positive regulator required for the expression of xapA and xapB. Binds to the inducer xanthosine. The polypeptide is HTH-type transcriptional regulator XapR (xapR) (Escherichia coli (strain K12)).